The chain runs to 210 residues: MGYIAVVDYDMGNLHSVCKGLEKVGGNPLVTDQAHVIDGATAIVLPGVGSFDPAVQHLRARGLEEVLKTAIAKGIPFLGICLGSQLLFDSSEEGQETGLGIIPGQVKHFRSEPGLTIPHMGWNGLQFNQPDLCLWQDLPPEPQVYFVHSYYMAPLDPQVIAASTTHGSQTIAAAIAKDNVMAVQFHPEKSSTLGLKILANFVKKVALSDI.

The region spanning 3 to 210 is the Glutamine amidotransferase type-1 domain; it reads YIAVVDYDMG…FVKKVALSDI (208 aa). Cys-81 (nucleophile) is an active-site residue. Active-site residues include His-186 and Glu-188.

As to quaternary structure, heterodimer of HisH and HisF.

It is found in the cytoplasm. It catalyses the reaction 5-[(5-phospho-1-deoxy-D-ribulos-1-ylimino)methylamino]-1-(5-phospho-beta-D-ribosyl)imidazole-4-carboxamide + L-glutamine = D-erythro-1-(imidazol-4-yl)glycerol 3-phosphate + 5-amino-1-(5-phospho-beta-D-ribosyl)imidazole-4-carboxamide + L-glutamate + H(+). The catalysed reaction is L-glutamine + H2O = L-glutamate + NH4(+). It participates in amino-acid biosynthesis; L-histidine biosynthesis; L-histidine from 5-phospho-alpha-D-ribose 1-diphosphate: step 5/9. IGPS catalyzes the conversion of PRFAR and glutamine to IGP, AICAR and glutamate. The HisH subunit catalyzes the hydrolysis of glutamine to glutamate and ammonia as part of the synthesis of IGP and AICAR. The resulting ammonia molecule is channeled to the active site of HisF. This Synechocystis sp. (strain ATCC 27184 / PCC 6803 / Kazusa) protein is Imidazole glycerol phosphate synthase subunit HisH (hisH).